We begin with the raw amino-acid sequence, 235 residues long: MTDLTEKNTALEEEKIESAVENQQKSIWKEIFAQGIWKNNPAVVQLLGLCPLLAVSSTATNALGLSLATMLVLTCTNTVISLFRQYIPKEIRIPIYVMIIATTVTAVQLLMNAYTYTLYQSLGIFIPLIVTNCIIIGRAEAFASKNSLLHSIWDGFSMGLGMALSLTILGALREIIGQGTIFEGIENLFGEQAKFLTHHIYHTDSSFLLFILPPGAFIGLGLLLAIKNRIDNVKK.

The next 5 helical transmembrane spans lie at 63–83, 93–113, 117–137, 152–172, and 206–226; these read LGLS…ISLF, IPIY…LMNA, TLYQ…IIIG, IWDG…LGAL, and SFLL…LLAI.

This sequence belongs to the NqrDE/RnfAE family. In terms of assembly, the complex is composed of six subunits: RnfA, RnfB, RnfC, RnfD, RnfE and RnfG.

Its subcellular location is the cell inner membrane. Part of a membrane-bound complex that couples electron transfer with translocation of ions across the membrane. This chain is Ion-translocating oxidoreductase complex subunit E, found in Haemophilus influenzae (strain PittEE).